The primary structure comprises 371 residues: Peptide chain release factor 2 (371 aa).

Position 253 is an N5-methylglutamine (glutamine 253).

This sequence belongs to the prokaryotic/mitochondrial release factor family. In terms of processing, methylated by PrmC. Methylation increases the termination efficiency of RF2.

It is found in the cytoplasm. In terms of biological role, peptide chain release factor 2 directs the termination of translation in response to the peptide chain termination codons UGA and UAA. The protein is Peptide chain release factor 2 of Mycobacterium ulcerans (strain Agy99).